The chain runs to 333 residues: Arylacetonitrilase (333 aa).

The CN hydrolase domain maps to 9 to 284 (VRVAVTQAEP…EGIIYADLEM (276 aa)). Residue E49 is the Proton acceptor of the active site. K129 is a catalytic residue. The Nucleophile role is filled by C164.

This sequence belongs to the carbon-nitrogen hydrolase superfamily. Nitrilase family.

It catalyses the reaction a nitrile + 2 H2O = a carboxylate + NH4(+). It carries out the reaction 4-chlorophenylacetonitrile + 2 H2O = 4-chlorophenylacetate + NH4(+). In terms of biological role, nitrilase that hydrolyzes preferentially phenylacetonitrile, (R,S)-mandelonitrile, and 3-indolylacetonitrile. The protein is Arylacetonitrilase of Aspergillus oryzae (strain ATCC 42149 / RIB 40) (Yellow koji mold).